A 359-amino-acid chain; its full sequence is DNA integrity scanning protein DisA (359 aa).

In terms of domain architecture, DAC spans 7–146 (DDIFRATLAA…GRRYVLDGSA (140 aa)). Residues Gly-74, Leu-92, and 105–109 (TRHRT) each bind ATP.

This sequence belongs to the DisA family. As to quaternary structure, homooctamer. Requires Mg(2+) as cofactor.

It carries out the reaction 2 ATP = 3',3'-c-di-AMP + 2 diphosphate. Participates in a DNA-damage check-point that is active prior to asymmetric division when DNA is damaged. DisA forms globular foci that rapidly scan along the chromosomes during sporulation, searching for lesions. When a lesion is present, DisA pauses at the lesion site. This triggers a cellular response that culminates in a temporary block in sporulation initiation. Functionally, also has diadenylate cyclase activity, catalyzing the condensation of 2 ATP molecules into cyclic di-AMP (c-di-AMP). c-di-AMP acts as a signaling molecule that couples DNA integrity with progression of sporulation. The rise in c-di-AMP level generated by DisA while scanning the chromosome, operates as a positive signal that advances sporulation; upon encountering a lesion, the DisA focus arrests at the damaged site and halts c-di-AMP synthesis. The sequence is that of DNA integrity scanning protein DisA from Frankia alni (strain DSM 45986 / CECT 9034 / ACN14a).